The chain runs to 416 residues: Serine hydroxymethyltransferase (416 aa).

Residues leucine 121 and 125 to 127 each bind (6S)-5,6,7,8-tetrahydrofolate; that span reads GHL. Lysine 229 is modified (N6-(pyridoxal phosphate)lysine).

Belongs to the SHMT family. Homodimer. Pyridoxal 5'-phosphate serves as cofactor.

The protein resides in the cytoplasm. It catalyses the reaction (6R)-5,10-methylene-5,6,7,8-tetrahydrofolate + glycine + H2O = (6S)-5,6,7,8-tetrahydrofolate + L-serine. Its pathway is one-carbon metabolism; tetrahydrofolate interconversion. It functions in the pathway amino-acid biosynthesis; glycine biosynthesis; glycine from L-serine: step 1/1. Functionally, catalyzes the reversible interconversion of serine and glycine with tetrahydrofolate (THF) serving as the one-carbon carrier. This reaction serves as the major source of one-carbon groups required for the biosynthesis of purines, thymidylate, methionine, and other important biomolecules. Also exhibits THF-independent aldolase activity toward beta-hydroxyamino acids, producing glycine and aldehydes, via a retro-aldol mechanism. This is Serine hydroxymethyltransferase from Neisseria gonorrhoeae.